Reading from the N-terminus, the 204-residue chain is NAD(P)H dehydrogenase (quinone) (204 aa).

One can recognise a Flavodoxin-like domain in the interval 4–195 (IQIVFYSMYG…AIARFQGAHV (192 aa)). FMN contacts are provided by residues 10–15 (SMYGHI) and 83–85 (TRF). Tyrosine 12 is a binding site for NAD(+). Tryptophan 103 serves as a coordination point for substrate. Residues 118–124 (STATQHG) and histidine 139 contribute to the FMN site.

The protein belongs to the WrbA family. The cofactor is FMN.

The enzyme catalyses a quinone + NADH + H(+) = a quinol + NAD(+). It catalyses the reaction a quinone + NADPH + H(+) = a quinol + NADP(+). The protein is NAD(P)H dehydrogenase (quinone) of Trichlorobacter lovleyi (strain ATCC BAA-1151 / DSM 17278 / SZ) (Geobacter lovleyi).